The chain runs to 100 residues: Large ribosomal subunit protein uL23 (100 aa).

The protein belongs to the universal ribosomal protein uL23 family. In terms of assembly, part of the 50S ribosomal subunit. Contacts protein L29, and trigger factor when it is bound to the ribosome.

Functionally, one of the early assembly proteins it binds 23S rRNA. One of the proteins that surrounds the polypeptide exit tunnel on the outside of the ribosome. Forms the main docking site for trigger factor binding to the ribosome. The sequence is that of Large ribosomal subunit protein uL23 from Prochlorococcus marinus subsp. pastoris (strain CCMP1986 / NIES-2087 / MED4).